A 364-amino-acid polypeptide reads, in one-letter code: Geissoschizine synthase (364 aa).

Zn(2+) is bound at residue cysteine 51. Asparagine 52 contributes to the NADP(+) binding site. Zn(2+)-binding residues include histidine 73, glutamate 74, cysteine 104, cysteine 107, cysteine 110, cysteine 118, and cysteine 168. Positions 194, 196, 197, 216, 217, 218, 221, 261, 280, 282, 304, 306, and 351 each coordinate NADP(+).

It belongs to the zinc-containing alcohol dehydrogenase family. Class-III subfamily. Homodimer. Requires Zn(2+) as cofactor. As to expression, expressed in leaf epidermis.

It carries out the reaction (19E)-geissoschizine + NADP(+) = 4,21-dehydrogeissoschizine + NADPH. Its pathway is alkaloid biosynthesis. Its function is as follows. Component of the seco-iridoid and derivatives monoterpenoid indole alkaloids (MIAs, e.g. catharanthine, tabersonine, vincadifformine, vindoline, vincristine, quinine and strychnine) biosynthesis pathway. During the conversion of strictosidine aglycone to geissoschizine, catalyzes iminium reduction on 4,21-dehydrogeissoschizine to produce 19E-geissoschizine, precursor of catharanthine and tabersonine derivatives. May also trigger the production of reactive intermediate used by the HL1, HL2, HL3 and HL4 to form catharanthine, vincadifformine and tabersonine. The protein is Geissoschizine synthase of Catharanthus roseus (Madagascar periwinkle).